The sequence spans 142 residues: Hemoglobin subunit alpha (142 aa).

Residues 2–142 (VLSADDKANI…VSTVLTSKYR (141 aa)) form the Globin domain. S4 carries the post-translational modification Phosphoserine. 2 positions are modified to N6-succinyllysine: K8 and K12. K17 is modified (N6-acetyllysine; alternate). K17 is modified (N6-succinyllysine; alternate). At Y25 the chain carries Phosphotyrosine. S36 carries the post-translational modification Phosphoserine. The residue at position 41 (K41) is an N6-succinyllysine. Position 50 is a phosphoserine (S50). Residue H59 coordinates O2. H88 serves as a coordination point for heme b. Residue T109 is modified to Phosphothreonine. 2 positions are modified to phosphoserine: S125 and S132. T135 and T138 each carry phosphothreonine. Residue S139 is modified to Phosphoserine.

It belongs to the globin family. Heterotetramer of two alpha chains and two beta chains. Red blood cells.

In terms of biological role, involved in oxygen transport from the lung to the various peripheral tissues. Functionally, hemopressin acts as an antagonist peptide of the cannabinoid receptor CNR1. Hemopressin-binding efficiently blocks cannabinoid receptor CNR1 and subsequent signaling. This is Hemoglobin subunit alpha (HBA) from Cricetomys gambianus (Northern giant pouched rat).